The following is a 358-amino-acid chain: MTRLLIAASGTGGHLFPALAVADALDGHCQVSWLGVPDRLETELVPARFKLITVNAGGLQGRGITKLVQLIRLLAASITVRRLIRTHQIDAVFTTGGYIAAPAILGARWCGVPAVLHESNAIPGRVTRLLGRFCSAVAVGLPVAAGRIPGCRPVLTGTPVRSGFLNAQPLPDWVPSGAGPLLVVMGGSQGAIGLNRMVRAVLPELLEQGCRVVHLTGSNDPDVGELQHPRLVECRFSDDIPGLLQHADLAISRAGAGSLSELAVCGTPSILVPFPQAADQHQDANAACAAELGGAVIVHQHPPGHPALGNSIKRLLGARLGDTDSRPELLEQMRAGMDELAQRDADAQLARLLADLVR.

UDP-N-acetyl-alpha-D-glucosamine is bound by residues 11-13, Asn120, Arg161, Ser188, and Gln282; that span reads TGG.

Belongs to the glycosyltransferase 28 family. MurG subfamily.

It is found in the cell inner membrane. The enzyme catalyses di-trans,octa-cis-undecaprenyl diphospho-N-acetyl-alpha-D-muramoyl-L-alanyl-D-glutamyl-meso-2,6-diaminopimeloyl-D-alanyl-D-alanine + UDP-N-acetyl-alpha-D-glucosamine = di-trans,octa-cis-undecaprenyl diphospho-[N-acetyl-alpha-D-glucosaminyl-(1-&gt;4)]-N-acetyl-alpha-D-muramoyl-L-alanyl-D-glutamyl-meso-2,6-diaminopimeloyl-D-alanyl-D-alanine + UDP + H(+). Its pathway is cell wall biogenesis; peptidoglycan biosynthesis. In terms of biological role, cell wall formation. Catalyzes the transfer of a GlcNAc subunit on undecaprenyl-pyrophosphoryl-MurNAc-pentapeptide (lipid intermediate I) to form undecaprenyl-pyrophosphoryl-MurNAc-(pentapeptide)GlcNAc (lipid intermediate II). This Synechococcus sp. (strain CC9902) protein is UDP-N-acetylglucosamine--N-acetylmuramyl-(pentapeptide) pyrophosphoryl-undecaprenol N-acetylglucosamine transferase.